The sequence spans 644 residues: Exoribonuclease 2 (644 aa).

Positions 189 to 516 (REDLTALDFV…NHRLLKAVIK (328 aa)) constitute an RNB domain. One can recognise an S1 motif domain in the interval 561–643 (DTRFAAEIVD…ETRSIIARPV (83 aa)).

The protein belongs to the RNR ribonuclease family. RNase II subfamily.

It localises to the cytoplasm. The catalysed reaction is Exonucleolytic cleavage in the 3'- to 5'-direction to yield nucleoside 5'-phosphates.. In terms of biological role, involved in mRNA degradation. Hydrolyzes single-stranded polyribonucleotides processively in the 3' to 5' direction. In Escherichia coli O139:H28 (strain E24377A / ETEC), this protein is Exoribonuclease 2.